The primary structure comprises 376 residues: Inactive 2'-5'-oligoadenylate synthase 1B (376 aa).

Over 1-351 (MEQDLRSIPA…VPTEVGVPMK (351 aa)) the chain is Cytoplasmic. The helical; Anchor for type IV membrane protein transmembrane segment at 352 to 370 (YLLCRIFWLLFWSLFHFIF) threads the bilayer. The Extracellular portion of the chain corresponds to 371–376 (GKTSSG).

The protein belongs to the 2-5A synthase family. As to quaternary structure, interacts with OSBPL1A and ABCF3. As to expression, highly expressed in lung, spleen and thymus. Also detected at lower levels in heart, kidney, liver, lung, skeletal muscle, testes, uterus and ovaries.

The protein localises to the endoplasmic reticulum membrane. In terms of biological role, does not have 2'-5'-OAS activity, but can bind double-stranded RNA. The full-length protein displays antiviral activity against flaviviruses such as west Nile virus (WNV) via an alternative antiviral pathway independent of RNase L. The truncated form of the protein lacks antiviral activity. This is Inactive 2'-5'-oligoadenylate synthase 1B (Oas1b) from Mus musculus (Mouse).